The chain runs to 173 residues: Peptidoglycan-associated lipoprotein (173 aa).

The signal sequence occupies residues 1 to 21; it reads MKSKKIFKILTLLLPMITTFS. C22 is lipidated: N-palmitoyl cysteine. Residue C22 is the site of S-diacylglycerol cysteine attachment. The OmpA-like domain maps to 59–173; it reads ETLEKLKKGN…KNRRSVIIYQ (115 aa).

The protein belongs to the Pal lipoprotein family.

The protein resides in the cell outer membrane. The polypeptide is Peptidoglycan-associated lipoprotein (Buchnera aphidicola subsp. Baizongia pistaciae (strain Bp)).